A 628-amino-acid polypeptide reads, in one-letter code: Voltage-gated potassium channel KCNC4 (628 aa).

2 disordered regions span residues 1 to 24 and 62 to 88; these read MISS…SKTC and LAWL…GSSG. An inactivation gate region spans residues 1–28; the sequence is MISSVCVSSYRGRKSGNKPPSKTCLKEE. Over 1–230 the chain is Cytoplasmic; the sequence is MISSVCVSSY…EDPYSSRAAR (230 aa). Residues Ser-8, Ser-9, Ser-15, and Ser-21 each carry the phosphoserine modification. Gly residues predominate over residues 77-88; the sequence is DGGGAGSSGSSG. Zn(2+)-binding residues include His-120, Cys-126, Cys-147, and Cys-148. A helical transmembrane segment spans residues 231 to 251; the sequence is VVAFASLFFILVSITTFCLET. Asn-260 and Asn-269 each carry an N-linked (GlcNAc...) asparagine glycan. Residues 282–302 form a helical membrane-spanning segment; it reads EPILTYIEGVCVMWFTLEFLV. Topologically, residues 303-316 are cytoplasmic; sequence RIVCCPDTLDFVKN. The helical transmembrane segment at 317 to 337 threads the bilayer; it reads LLNIIDFVAILPFYLEVGLSG. The helical; Voltage-sensor transmembrane segment at 349–368 threads the bilayer; that stretch reads FLRVVRFVRILRIFKLTRHF. Residues 369–384 are Cytoplasmic-facing; that stretch reads VGLRVLGHTLRASTNE. A helical transmembrane segment spans residues 385–405; sequence FLLLIIFLALGVLIFATMIYY. Residues Thr-440, Leu-441, Gly-442, and Tyr-443 each contribute to the K(+) site. A Selectivity filter motif is present at residues 440–445; that stretch reads TLGYGD. The helical transmembrane segment at 456–476 threads the bilayer; it reads VGALCALAGVLTIAMPVPVIV. The Cytoplasmic portion of the chain corresponds to 477–628; it reads NNFGMYYSLA…CVPVSHTCAL (152 aa). Residues 493–584 are disordered; it reads PKKRKKHVPR…RRALRRSGTR (92 aa). Residues 531-546 are compositionally biased toward basic and acidic residues; it reads AREEGVVERKRADSKQ.

This sequence belongs to the potassium channel family. C (Shaw) (TC 1.A.1.2) subfamily. Kv3.4/KCNC4 sub-subfamily. As to quaternary structure, homotetramer. Heterotetramer of potassium channel proteins. Post-translationally, phosphorylation of serine residues in the inactivation gate inhibits rapid channel closure.

It localises to the membrane. It catalyses the reaction K(+)(in) = K(+)(out). Its function is as follows. Voltage-gated potassium channel that opens in response to the voltage difference across the membrane, forming a potassium-selective channel through which potassium ions pass in accordance with their electrochemical gradient. The channel displays rapid activation and inactivation kinetics. In Mus musculus (Mouse), this protein is Voltage-gated potassium channel KCNC4.